The following is a 364-amino-acid chain: Phosphoserine aminotransferase (364 aa).

Arginine 42 is an L-glutamate binding site. Pyridoxal 5'-phosphate is bound by residues 76-77 (AS), tryptophan 100, threonine 150, aspartate 169, and glutamine 192. Lysine 193 carries the post-translational modification N6-(pyridoxal phosphate)lysine. A pyridoxal 5'-phosphate-binding site is contributed by 234–235 (NT).

The protein belongs to the class-V pyridoxal-phosphate-dependent aminotransferase family. SerC subfamily. Homodimer. Pyridoxal 5'-phosphate serves as cofactor.

It localises to the cytoplasm. The enzyme catalyses O-phospho-L-serine + 2-oxoglutarate = 3-phosphooxypyruvate + L-glutamate. It catalyses the reaction 4-(phosphooxy)-L-threonine + 2-oxoglutarate = (R)-3-hydroxy-2-oxo-4-phosphooxybutanoate + L-glutamate. The protein operates within amino-acid biosynthesis; L-serine biosynthesis; L-serine from 3-phospho-D-glycerate: step 2/3. Functionally, catalyzes the reversible conversion of 3-phosphohydroxypyruvate to phosphoserine and of 3-hydroxy-2-oxo-4-phosphonooxybutanoate to phosphohydroxythreonine. This chain is Phosphoserine aminotransferase, found in Shouchella clausii (strain KSM-K16) (Alkalihalobacillus clausii).